The chain runs to 556 residues: (6-4)DNA photolyase (556 aa).

The 139-residue stretch at 24 to 162 (SGSLIWFRKG…EVFSPVSHTL (139 aa)) folds into the Photolyase/cryptochrome alpha/beta domain. Phosphate is bound at residue E262. Residues K263, 276-280 (TTVMS), 317-321 (QLLWR), 380-383 (WMHH), R386, 415-417 (DSD), and N421 each bind FAD. Residue W320 coordinates DNA. The segment at 382 to 387 (HHLARH) is interaction with DNA. A DNA-binding site is contributed by W427. Residues 534–556 (LRRKLQKDEHEESKIRNQRPKLK) are disordered. Basic and acidic residues predominate over residues 539–548 (QKDEHEESKI).

The protein belongs to the DNA photolyase class-1 family. The cofactor is FAD. Expressed in siliques, flowers and leaves. Not detected in roots.

The catalysed reaction is (6-4) photoproduct (in DNA) = 2 pyrimidine residues (in DNA).. In terms of biological role, involved in repair of UV radiation-induced DNA damage. Catalyzes the photoreactivation of pyrimidine [6-4] pyrimidone photoproduct (6-4 products). Binds specifically to DNA containing 6-4 products and repairs these lesions in a visible light-dependent manner. Not required for repair of cyclobutane pyrimidine dimer (CPD). The sequence is that of (6-4)DNA photolyase (UVR3) from Arabidopsis thaliana (Mouse-ear cress).